A 100-amino-acid polypeptide reads, in one-letter code: MARKSLIQREKKRQKLEEKYHLIRRSSKKEISKVSSLDEKWEIHVKLQSPPRNSAPIRLHRRCFLTGRPRANYRDFGLSGHVLREMVHACLLPGATRSSW.

This sequence belongs to the universal ribosomal protein uS14 family. In terms of assembly, part of the 30S ribosomal subunit.

The protein resides in the plastid. It is found in the chloroplast. Functionally, binds 16S rRNA, required for the assembly of 30S particles. The protein is Small ribosomal subunit protein uS14c of Nymphaea alba (White water-lily).